We begin with the raw amino-acid sequence, 523 residues long: Cytochrome P450 monooxygenase ple1 (523 aa).

The chain crosses the membrane as a helical span at residues Ala-9–Lys-29. Asn-141 is a glycosylation site (N-linked (GlcNAc...) asparagine). Position 444 (Cys-444) interacts with heme.

Belongs to the cytochrome P450 family. Requires heme as cofactor.

Its subcellular location is the membrane. It functions in the pathway secondary metabolite biosynthesis; terpenoid biosynthesis. Cytochrome P450 monooxygenase; part of the gene cluster that mediates the biosynthesis of pleuromutilin, a tricyclic diterpene showing antibacterial properties. The geranylgeranyl diphosphate (GGPP) synthase ple4 catalyzes the first step in pleuromutilin biosynthesis. GGPP is then substrate of the premutilin synthase (PS) ple3 to yield premutilin. Premutilin synthase is a bifunctional enzyme composed of the fusion of a class II diterpene cyclase (DTC) and a class I diterpene synthase (DTS), with the corresponding domains and active sites containing characteristic aspartate-rich motifs. GGPP is first converted to mutildienyl-diphosphate (MPP) at the class II DTC site. MPP is subsequently further cyclized at the class I DTS site, followed by a 1,5-hydride shift and addition of water prior to terminating deprotonation, to yield premutilin. The cytochrome P450 monooxygenases ple5 and ple6 hydroxylate premutilin at C-11 and C-3, respectively, producing 11-hydroxypremutilin and 3-hydroxypremutilin. The combination of the actions of both ple5 and ple6 leads to the production of 3,11-dihydroxypremutilin. The short chain dehydrogenase ple7 further converts 3,11-dihydroxypremutilin into mutilin. The acetyltransferase ple2 then acetylates mutilin to produce 14-O-acetylmutilin. Finally, the cytochrome P450 monooxygenase ple1 catalyzes hydroxylation on the alpha position of the acetyl side chain of 14-O-acetylmutilin to yield pleuromutilin. The polypeptide is Cytochrome P450 monooxygenase ple1 (Rhodocybe pseudopiperita (Clitopilus pseudopiperitus)).